Reading from the N-terminus, the 237-residue chain is Ribosomal RNA small subunit methyltransferase G (237 aa).

S-adenosyl-L-methionine contacts are provided by residues glycine 78, phenylalanine 83, 129-130 (AE), and arginine 148.

This sequence belongs to the methyltransferase superfamily. RNA methyltransferase RsmG family.

It is found in the cytoplasm. Functionally, specifically methylates the N7 position of a guanine in 16S rRNA. The sequence is that of Ribosomal RNA small subunit methyltransferase G from Clostridium kluyveri (strain ATCC 8527 / DSM 555 / NBRC 12016 / NCIMB 10680 / K1).